The chain runs to 360 residues: Photosystem II protein D1 2 (360 aa).

A run of 3 helical transmembrane segments spans residues 29–46 (YIGWFGVLMIPTLLAATT), 118–133 (HFLTGVFCYLGREWEL), and 142–156 (WICLAFSAPVAAATA). A chlorophyll a-binding site is contributed by His118. Tyr126 is a binding site for pheophytin a. The [CaMn4O5] cluster site is built by Asp170 and Glu189. A helical membrane pass occupies residues 197-218 (FHMLGVAGVFGGSLFSAMHGSL). Position 198 (His198) interacts with chlorophyll a. A quinone contacts are provided by residues His215 and 264–265 (SF). Residue His215 participates in Fe cation binding. His272 lines the Fe cation pocket. Residues 274 to 288 (FLAAWPVIGIWFTAL) form a helical membrane-spanning segment. [CaMn4O5] cluster-binding residues include His332, Glu333, Asp342, and Ala344. Positions 345 to 360 (AGEVAPVALTAPAING) are excised as a propeptide.

This sequence belongs to the reaction center PufL/M/PsbA/D family. As to quaternary structure, PSII is composed of 1 copy each of membrane proteins PsbA, PsbB, PsbC, PsbD, PsbE, PsbF, PsbH, PsbI, PsbJ, PsbK, PsbL, PsbM, PsbT, PsbX, PsbY, PsbZ, Psb30/Ycf12, peripheral proteins PsbO, CyanoQ (PsbQ), PsbU, PsbV and a large number of cofactors. It forms dimeric complexes. The cofactor is The D1/D2 heterodimer binds P680, chlorophylls that are the primary electron donor of PSII, and subsequent electron acceptors. It shares a non-heme iron and each subunit binds pheophytin, quinone, additional chlorophylls, carotenoids and lipids. D1 provides most of the ligands for the Mn4-Ca-O5 cluster of the oxygen-evolving complex (OEC). There is also a Cl(-1) ion associated with D1 and D2, which is required for oxygen evolution. The PSII complex binds additional chlorophylls, carotenoids and specific lipids.. Tyr-161 forms a radical intermediate that is referred to as redox-active TyrZ, YZ or Y-Z. In terms of processing, C-terminally processed by CtpA; processing is essential to allow assembly of the oxygen-evolving complex and thus photosynthetic growth.

The protein localises to the cellular thylakoid membrane. The catalysed reaction is 2 a plastoquinone + 4 hnu + 2 H2O = 2 a plastoquinol + O2. In terms of biological role, photosystem II (PSII) is a light-driven water:plastoquinone oxidoreductase that uses light energy to abstract electrons from H(2)O, generating O(2) and a proton gradient subsequently used for ATP formation. It consists of a core antenna complex that captures photons, and an electron transfer chain that converts photonic excitation into a charge separation. The D1/D2 (PsbA/PsbD) reaction center heterodimer binds P680, the primary electron donor of PSII as well as several subsequent electron acceptors. The sequence is that of Photosystem II protein D1 2 from Trichormus variabilis (strain ATCC 29413 / PCC 7937) (Anabaena variabilis).